A 324-amino-acid chain; its full sequence is Holliday junction branch migration complex subunit RuvB (324 aa).

A large ATPase domain (RuvB-L) region spans residues 1 to 168 (MEDLALRPKT…FGIVEHLEYY (168 aa)). ATP-binding residues include tyrosine 14, isoleucine 15, glycine 48, lysine 51, threonine 52, threonine 53, aspartate 97, threonine 146, tyrosine 168, and arginine 205. Mg(2+) is bound at residue threonine 52. The tract at residues 169-239 (TPEELAQGVM…RALEALAALG (71 aa)) is small ATPAse domain (RuvB-S). The head domain (RuvB-H) stretch occupies residues 242–324 (ELGLEKRDRE…PPPVGPLLEP (83 aa)). Residues arginine 297 and arginine 302 each contribute to the DNA site.

It belongs to the RuvB family. Homohexamer. Forms a complex with RuvA. Electron microscopic images suggest 2 closely interacting RuvA tetramers sandwich the HJ DNA; each tetramer associates with an RuvB hexamer. Forms 2 complexes with Holliday junction (HJ) DNA which probably have 1 and 2 RuvA tetramers per complex (called complex I and complex II). Forms an RuvA(8)-RuvB(12)-Holliday junction (HJ) complex. HJ DNA is sandwiched between 2 RuvA tetramers; dsDNA enters through RuvA and exits via RuvB. An RuvB hexamer assembles on each DNA strand where it exits the tetramer. Each RuvB hexamer is contacted by two RuvA subunits (via domain III) on 2 adjacent RuvB subunits; this complex drives branch migration. In the full resolvosome a probable DNA-RuvA(4)-RuvB(12)-RuvC(2) complex forms which resolves the HJ. Requires Mg(2+) as cofactor.

Its subcellular location is the cytoplasm. The catalysed reaction is ATP + H2O = ADP + phosphate + H(+). Its activity is regulated as follows. The activity of RuvB is enhanced by E.coli RuvA. Functionally, the RuvA-RuvB-RuvC complex processes Holliday junction (HJ) DNA during genetic recombination and DNA repair, while the RuvA-RuvB complex plays an important role in the rescue of blocked DNA replication forks via replication fork reversal (RFR). RuvA specifically binds to HJ cruciform DNA, conferring on it an open structure. The RuvB hexamer acts as an ATP-dependent pump, pulling dsDNA into and through the RuvAB complex. RuvB forms 2 homohexamers on either side of HJ DNA bound by 1 or 2 RuvA tetramers; 4 subunits per hexamer contact DNA at a time. Coordinated motions by a converter formed by DNA-disengaged RuvB subunits stimulates ATP hydrolysis and nucleotide exchange. Immobilization of the converter enables RuvB to convert the ATP-contained energy into a lever motion, pulling 2 nucleotides of DNA out of the RuvA tetramer per ATP hydrolyzed, thus driving DNA branch migration. The RuvB motors rotate together with the DNA substrate, which together with the progressing nucleotide cycle form the mechanistic basis for DNA recombination by continuous HJ branch migration. Branch migration allows RuvC to scan DNA until it finds its consensus sequence, where it cleaves and resolves cruciform DNA. Its function is as follows. RuvB is a Mg(2+)-dependent, DNA-dependent ATPase with an equal preference for supercoiled and linear dsDNA; all (d)NTPs tested were efficiently hydrolyzed. Promotes Holliday junction (HJ) dissociation at 60 degrees Celsius in the presence of ATP but not ATP-gamma-S or ADP; (d)ATP, (d)CTP and dTTP also power dissociation in the absence of any RuvA. RuvA stimulates the ATPase of RuvB in the presence of dsDNA and HJ branch migration by RuvB. Excess RuvB stimulates some branch migration in vitro even in the presence of mutant RuvA. This Thermus thermophilus (strain ATCC 27634 / DSM 579 / HB8) protein is Holliday junction branch migration complex subunit RuvB.